Consider the following 520-residue polypeptide: MAPVNKSDKDRVIIFDTTLRDGEQCPGATMTFEEKLEVAELLDDMGVDVIEAGFPITSEGDFQAVSEIARRSKNAVIAGLSRAHPADIDRCAEAVKFAKRGRVHTVIATSPLHMRVKLNKTPEQVIETSVAMVARARNQIDDVEWSAEDGTRSEMDYLCRIVEAVIKAGATTVNIPDTVGYTVPEEYTHFMKTLIERVPNSDKAVFSVHCHNDLGMAVANSLAGVVGGARQVECTINGIGERAGNAALEEIVMAINVRNDKFPYWNKIDTTQLTRASKVVSAATSFPVQYNKAIVGRNAFAHESGIHQDGVLKDASTYEIMRPEMVGLKQSSLVLGKHSGRHAFVHKLEEMGYKLGPNQLEDAFTRMKALADRKKDIYDEDIEALVDEEMAASHDRIKLTSLTVIAGTHGPQRATMKLDVDGQIKIEEAEGNGPVDAVFNCIKRLVPHEAKLELYQVHAVTEGTDAQAEVSVRLSHDGRSMTARAADPDTLVASAKAYLGALNKIVMKRQRDTVTTAAAS.

The Pyruvate carboxyltransferase domain maps to 12–274; it reads VIIFDTTLRD…WNKIDTTQLT (263 aa). Residues Asp21, His209, His211, and Asn245 each contribute to the Mn(2+) site. The segment at 398–520 is regulatory domain; it reads KLTSLTVIAG…RDTVTTAAAS (123 aa).

It belongs to the alpha-IPM synthase/homocitrate synthase family. LeuA type 1 subfamily. As to quaternary structure, homodimer. Requires Mn(2+) as cofactor.

It is found in the cytoplasm. It catalyses the reaction 3-methyl-2-oxobutanoate + acetyl-CoA + H2O = (2S)-2-isopropylmalate + CoA + H(+). Its pathway is amino-acid biosynthesis; L-leucine biosynthesis; L-leucine from 3-methyl-2-oxobutanoate: step 1/4. Its function is as follows. Catalyzes the condensation of the acetyl group of acetyl-CoA with 3-methyl-2-oxobutanoate (2-ketoisovalerate) to form 3-carboxy-3-hydroxy-4-methylpentanoate (2-isopropylmalate). This is 2-isopropylmalate synthase from Bradyrhizobium diazoefficiens (strain JCM 10833 / BCRC 13528 / IAM 13628 / NBRC 14792 / USDA 110).